A 640-amino-acid polypeptide reads, in one-letter code: 1-deoxy-D-xylulose-5-phosphate synthase (640 aa).

Thiamine diphosphate-binding positions include His-78 and 119 to 121 (GHS). Residue Asp-151 coordinates Mg(2+). Residues 152–153 (GA), Asn-180, Tyr-289, and Glu-371 each bind thiamine diphosphate. Asn-180 lines the Mg(2+) pocket.

Belongs to the transketolase family. DXPS subfamily. In terms of assembly, homodimer. The cofactor is Mg(2+). Thiamine diphosphate is required as a cofactor.

It carries out the reaction D-glyceraldehyde 3-phosphate + pyruvate + H(+) = 1-deoxy-D-xylulose 5-phosphate + CO2. It functions in the pathway metabolic intermediate biosynthesis; 1-deoxy-D-xylulose 5-phosphate biosynthesis; 1-deoxy-D-xylulose 5-phosphate from D-glyceraldehyde 3-phosphate and pyruvate: step 1/1. In terms of biological role, catalyzes the acyloin condensation reaction between C atoms 2 and 3 of pyruvate and glyceraldehyde 3-phosphate to yield 1-deoxy-D-xylulose-5-phosphate (DXP). The sequence is that of 1-deoxy-D-xylulose-5-phosphate synthase from Bartonella quintana (strain Toulouse) (Rochalimaea quintana).